Reading from the N-terminus, the 382-residue chain is Galactokinase (382 aa).

Residue 34 to 37 participates in substrate binding; that stretch reads EHTD. 124–130 lines the ATP pocket; it reads GAGLSSS. Mg(2+) is bound by residues Ser130 and Glu162. Asp174 acts as the Proton acceptor in catalysis. Substrate is bound at residue Tyr223.

Belongs to the GHMP kinase family. GalK subfamily.

The protein resides in the cytoplasm. The catalysed reaction is alpha-D-galactose + ATP = alpha-D-galactose 1-phosphate + ADP + H(+). It functions in the pathway carbohydrate metabolism; galactose metabolism. Catalyzes the transfer of the gamma-phosphate of ATP to D-galactose to form alpha-D-galactose-1-phosphate (Gal-1-P). This chain is Galactokinase, found in Salmonella newport (strain SL254).